The chain runs to 140 residues: ATP synthase epsilon chain (140 aa).

Belongs to the ATPase epsilon chain family. F-type ATPases have 2 components, CF(1) - the catalytic core - and CF(0) - the membrane proton channel. CF(1) has five subunits: alpha(3), beta(3), gamma(1), delta(1), epsilon(1). CF(0) has three main subunits: a, b and c.

It localises to the cell inner membrane. Produces ATP from ADP in the presence of a proton gradient across the membrane. This chain is ATP synthase epsilon chain, found in Xylella fastidiosa (strain Temecula1 / ATCC 700964).